The chain runs to 189 residues: Large ribosomal subunit protein uL13 (189 aa).

The protein belongs to the universal ribosomal protein uL13 family.

This Salmo trutta (Brown trout) protein is Large ribosomal subunit protein uL13 (rpl13a).